The primary structure comprises 242 residues: Uridylate kinase (242 aa).

17 to 20 contributes to the ATP binding site; that stretch reads KLGG. UMP is bound at residue G58. ATP-binding residues include G59 and R63. Residues D78 and 139 to 146 contribute to the UMP site; that span reads MGMPYFST. Residues F172 and D175 each contribute to the ATP site.

The protein belongs to the UMP kinase family. Homohexamer.

The protein localises to the cytoplasm. The catalysed reaction is UMP + ATP = UDP + ADP. The protein operates within pyrimidine metabolism; CTP biosynthesis via de novo pathway; UDP from UMP (UMPK route): step 1/1. Its activity is regulated as follows. Inhibited by UTP. In terms of biological role, catalyzes the reversible phosphorylation of UMP to UDP. The protein is Uridylate kinase of Rhodococcus jostii (strain RHA1).